Reading from the N-terminus, the 426-residue chain is MKYVSINPTKLEGQVKIPPSKSVCHRALICASLSSGVSNITNVDFSEDIEATCEALKSLGVIIEKGNNSLSIKGNSNLYVKKPNVHCFQSGSTLRFLIPLAATLGEEITFTGEGKLVERPLNVYYDIFKSQKIYYKTESGKLPLTINGKLKSGDYRVRGDVSSQFVTGLLFALPLLSGDSKIEITTELESKSYVDITIDMLGKFGVCVDGSSYREFIIKGNQTYKEVDCNIEGDFSQVAFWLVMGALGKGITCMGLDTDSLQGDRIIVHILKDMGVEIEEKENCIEVNPSKTTGVVIDVSQCPDLVPVLAALASVSHGTTEIINAARLRIKESDRLKAITSELNKIGAEVIEKEDSLIIHGKENLKGGNVTSWKDHRIAMALAAVSSKCTEPLVIEGAECVKKSYPGFWEDFRSLGGEIDEWSVGK.

3 residues coordinate 3-phosphoshikimate: Lys-21, Ser-22, and Arg-26. Lys-21 contributes to the phosphoenolpyruvate binding site. 2 residues coordinate phosphoenolpyruvate: Gly-91 and Arg-119. Ser-162, Ser-163, Gln-164, Ser-190, Asp-304, and Lys-331 together coordinate 3-phosphoshikimate. Phosphoenolpyruvate is bound at residue Gln-164. Catalysis depends on Asp-304, which acts as the Proton acceptor. Positions 335, 377, and 403 each coordinate phosphoenolpyruvate.

It belongs to the EPSP synthase family. In terms of assembly, monomer.

It is found in the cytoplasm. It catalyses the reaction 3-phosphoshikimate + phosphoenolpyruvate = 5-O-(1-carboxyvinyl)-3-phosphoshikimate + phosphate. It participates in metabolic intermediate biosynthesis; chorismate biosynthesis; chorismate from D-erythrose 4-phosphate and phosphoenolpyruvate: step 6/7. In terms of biological role, catalyzes the transfer of the enolpyruvyl moiety of phosphoenolpyruvate (PEP) to the 5-hydroxyl of shikimate-3-phosphate (S3P) to produce enolpyruvyl shikimate-3-phosphate and inorganic phosphate. This Clostridium kluyveri (strain ATCC 8527 / DSM 555 / NBRC 12016 / NCIMB 10680 / K1) protein is 3-phosphoshikimate 1-carboxyvinyltransferase.